A 477-amino-acid chain; its full sequence is Glutamyl-tRNA(Gln) amidotransferase subunit A (477 aa).

Catalysis depends on charge relay system residues Lys-76 and Ser-151. The Acyl-ester intermediate role is filled by Ser-175.

This sequence belongs to the amidase family. GatA subfamily. As to quaternary structure, heterotrimer of A, B and C subunits.

It catalyses the reaction L-glutamyl-tRNA(Gln) + L-glutamine + ATP + H2O = L-glutaminyl-tRNA(Gln) + L-glutamate + ADP + phosphate + H(+). Functionally, allows the formation of correctly charged Gln-tRNA(Gln) through the transamidation of misacylated Glu-tRNA(Gln) in organisms which lack glutaminyl-tRNA synthetase. The reaction takes place in the presence of glutamine and ATP through an activated gamma-phospho-Glu-tRNA(Gln). This chain is Glutamyl-tRNA(Gln) amidotransferase subunit A, found in Prosthecochloris aestuarii (strain DSM 271 / SK 413).